A 280-amino-acid polypeptide reads, in one-letter code: MRSPQLSCSASEGRAVEAALSVEHAGGRSMLRRQHVGYPLHVTRGFYLDAARPDLLTLYLQSASGGLYAGDRIGLDLSVARGAAFHLTTQSATVVRDGRGRGAVQRLAVNVEAGAFCAVTSDPYVLFPGAELALASEATVADDAVLCMADGFAVHDPHARGRSFTEFSSRLRIRRPDGRLLLQDAGRISGEDLQGALGRFAAAANLVLIAPPDRLPPVKELQQAADRCGALAGASAAPNESGLVLRVLASDGGTLSCAMEAAFHVAAAGALGVALARRRK.

The protein belongs to the UreD family. UreD, UreF and UreG form a complex that acts as a GTP-hydrolysis-dependent molecular chaperone, activating the urease apoprotein by helping to assemble the nickel containing metallocenter of UreC. The UreE protein probably delivers the nickel.

Its subcellular location is the cytoplasm. Functionally, required for maturation of urease via the functional incorporation of the urease nickel metallocenter. The chain is Urease accessory protein UreD 1 from Bradyrhizobium sp. (strain BTAi1 / ATCC BAA-1182).